The primary structure comprises 443 residues: Endonuclease CUE2 (443 aa).

2 CUE domains span residues 8–51 (DHES…KEND) and 55–98 (TVDN…NYET). The Smr domain maps to 347-443 (LDFHGFLPSE…YFRIEGKKKK (97 aa)).

MRNA endonuclease involved in the No-Go Decay (NGD) pathway, which catalyzes mRNA cleavage and degradation in response to ribosome collisions. Acts downstream of the ribosome collision sensor HEL2. Specifically recognizes and binds RPS7/eS7 polyubiquitinated by MOT2/NOT4 and HEL2, promoting CUE2 recruitment to stalled ribosomes, where it mediates mRNA cleavage upstream of the colliding ribosome. Also mediates mRNA cleavage within colliding ribosomes: recruited to colliding ribosomes downstream of the RQT (ribosome quality control trigger) complex following disassembly of stalled ribosomes and cleaves mRNAs partially released from the colliding ribosome. The polypeptide is Endonuclease CUE2 (Saccharomyces cerevisiae (strain ATCC 204508 / S288c) (Baker's yeast)).